The chain runs to 481 residues: 3-isopropylmalate dehydratase large subunit (481 aa).

[4Fe-4S] cluster contacts are provided by C363, C423, and C426. The tract at residues 434–465 (LRPGQRAASTSNRNFEGRQGRGGRTHLVSPPV) is disordered.

Belongs to the aconitase/IPM isomerase family. LeuC type 1 subfamily. In terms of assembly, heterodimer of LeuC and LeuD. The cofactor is [4Fe-4S] cluster.

It carries out the reaction (2R,3S)-3-isopropylmalate = (2S)-2-isopropylmalate. It participates in amino-acid biosynthesis; L-leucine biosynthesis; L-leucine from 3-methyl-2-oxobutanoate: step 2/4. In terms of biological role, catalyzes the isomerization between 2-isopropylmalate and 3-isopropylmalate, via the formation of 2-isopropylmaleate. This chain is 3-isopropylmalate dehydratase large subunit, found in Salinispora tropica (strain ATCC BAA-916 / DSM 44818 / JCM 13857 / NBRC 105044 / CNB-440).